The chain runs to 176 residues: MTNIRKSHPLIKIVNSSFIDLPAPSNISSWWNFGSLLGICLALQILTGLFLAMHYTSDTATAFNSVTHICRDVNYGWILRYLHANGASMFFICLYLHVGRGLHYGSYMYTETWNIGVTPLFAVMATAFMGYVLPWGQMSFWGATVITNLLSAIPYIGTDLAEWIWGGFSVDKATLT.

The next 3 helical transmembrane spans lie at 33–53 (FGSLLGICLALQILTGLFLAM), 77–98 (WILRYLHANGASMFFICLYLHV), and 113–133 (WNIGVTPLFAVMATAFMGYVL). Positions 83 and 97 each coordinate heme b.

It belongs to the cytochrome b family. As to quaternary structure, the cytochrome bc1 complex contains 11 subunits: 3 respiratory subunits (MT-CYB, CYC1 and UQCRFS1), 2 core proteins (UQCRC1 and UQCRC2) and 6 low-molecular weight proteins (UQCRH/QCR6, UQCRB/QCR7, UQCRQ/QCR8, UQCR10/QCR9, UQCR11/QCR10 and a cleavage product of UQCRFS1). This cytochrome bc1 complex then forms a dimer. Heme b serves as cofactor.

It localises to the mitochondrion inner membrane. Component of the ubiquinol-cytochrome c reductase complex (complex III or cytochrome b-c1 complex) that is part of the mitochondrial respiratory chain. The b-c1 complex mediates electron transfer from ubiquinol to cytochrome c. Contributes to the generation of a proton gradient across the mitochondrial membrane that is then used for ATP synthesis. This Myotis leibii (Eastern small-footed myotis) protein is Cytochrome b (MT-CYB).